The sequence spans 164 residues: Protein PPLZ02 (164 aa).

A DNA-binding region (AP2/ERF) is located at residues 7–64 (RYRGFRQRHWGSWVSEIRHSILKTRIWQGTFESAEDAARAYDEAARLMCGTRARTNFP).

The protein resides in the nucleus. In terms of biological role, essential for all lupin cells independent of the respective tissue. This is Protein PPLZ02 (PPLZ02) from Lupinus polyphyllus (Large-leaved lupine).